The sequence spans 112 residues: uncharacterized protein (112 aa).

This is an uncharacterized protein from Escherichia coli.